A 165-amino-acid polypeptide reads, in one-letter code: 2-halobenzoate 1,2-dioxygenase small subunit (165 aa).

It belongs to the bacterial ring-hydroxylating dioxygenase beta subunit family. In terms of assembly, heterohexamer of 3 large (CbdA) subunits and 3 small (CbdB) subunits. The heterohexamer is part of 2-halobenzoate dioxygenase two component enzyme system. The other component is a NADH:acceptor reductase (CdbC).

It catalyses the reaction a 2-halobenzoate + NADH + O2 + H(+) = a halide anion + catechol + CO2 + NAD(+). The protein operates within xenobiotic degradation; benzoate degradation via CoA ligation. In terms of biological role, component of 2-halobenzoate dioxygenase multicomponent enzyme system which catalyzes the incorporation of both atoms of molecular oxygen into 2-halobenzoate to form catechol. The polypeptide is 2-halobenzoate 1,2-dioxygenase small subunit (cbdB) (Burkholderia cepacia (Pseudomonas cepacia)).